Reading from the N-terminus, the 182-residue chain is Early nodulin-like protein 10 (182 aa).

An N-terminal signal peptide occupies residues 1 to 20; it reads MSSVMMCCCLLLLFGLLSEG. Residues 21-125 enclose the Phytocyanin domain; sequence REILVGGKSN…GEKLRVVVLS (105 aa). An N-linked (GlcNAc...) asparagine glycan is attached at N65. A disulfide bond links C79 and C113. N129 and N148 each carry an N-linked (GlcNAc...) asparagine glycan. N157 carries the GPI-anchor amidated asparagine lipid modification. Residues 158-182 constitute a propeptide, removed in mature form; the sequence is AHIMNKGSLNTAWSLLLLLPLGLLV.

The protein belongs to the early nodulin-like (ENODL) family. Mostly expressed in flowers, and, to a lower extent, in leaves, but barely in seedlings, stems, seeds and roots.

The protein localises to the cell membrane. Functionally, may act as a carbohydrate transporter. The chain is Early nodulin-like protein 10 from Arabidopsis thaliana (Mouse-ear cress).